Consider the following 382-residue polypeptide: B3 domain-containing protein Os03g0622100 (382 aa).

Residues 29-123 (CKHFLTYMVG…SFDVLIFDPS (95 aa)) constitute a DNA-binding region (TF-B3 1). Basic and acidic residues-rich tracts occupy residues 136 to 158 (RGFGREEKSAGAEGGGRDGDKNG) and 193 to 202 (QDHREEKKEG). Positions 136–222 (RGFGREEKSA…EDVDKDGEDR (87 aa)) are disordered. Residues 203–218 (DDEDEDEDEDEDVDKD) show a composition bias toward acidic residues. A DNA-binding region (TF-B3 2) is located at residues 261–363 (KVIHASHLLS…AGDRLRRRPR (103 aa)).

The protein resides in the nucleus. This chain is B3 domain-containing protein Os03g0622100, found in Oryza sativa subsp. japonica (Rice).